The primary structure comprises 123 residues: uncharacterized protein (123 aa).

This is an uncharacterized protein from Methanocaldococcus jannaschii (strain ATCC 43067 / DSM 2661 / JAL-1 / JCM 10045 / NBRC 100440) (Methanococcus jannaschii).